The chain runs to 465 residues: Probable Xaa-Pro aminopeptidase pepP (465 aa).

4 residues coordinate Mn(2+): aspartate 263, aspartate 274, glutamate 397, and glutamate 437.

This sequence belongs to the peptidase M24B family. The cofactor is Mn(2+).

It catalyses the reaction Release of any N-terminal amino acid, including proline, that is linked to proline, even from a dipeptide or tripeptide.. Functionally, catalyzes the removal of a penultimate prolyl residue from the N-termini of peptides. This chain is Probable Xaa-Pro aminopeptidase pepP (pepP), found in Penicillium rubens (strain ATCC 28089 / DSM 1075 / NRRL 1951 / Wisconsin 54-1255) (Penicillium chrysogenum).